The following is a 129-amino-acid chain: Lysozyme C, milk isozyme (129 aa).

Positions 1–129 (KVFSKCELAH…LSEYLASCNL (129 aa)) constitute a C-type lysozyme domain. 4 disulfides stabilise this stretch: Cys-6-Cys-127, Cys-30-Cys-115, Cys-65-Cys-80, and Cys-76-Cys-94. Catalysis depends on residues Glu-35 and Asp-53. 5 residues coordinate Ca(2+): Lys-82, Asp-85, Asn-87, Asp-90, and Asp-91.

It belongs to the glycosyl hydrolase 22 family. As to quaternary structure, monomer. The cofactor is Ca(2+).

The enzyme catalyses Hydrolysis of (1-&gt;4)-beta-linkages between N-acetylmuramic acid and N-acetyl-D-glucosamine residues in a peptidoglycan and between N-acetyl-D-glucosamine residues in chitodextrins.. Functionally, lysozymes have primarily a bacteriolytic function; those in tissues and body fluids are associated with the monocyte-macrophage system and enhance the activity of immunoagents. In Equus caballus (Horse), this protein is Lysozyme C, milk isozyme (LYZ).